A 574-amino-acid polypeptide reads, in one-letter code: Potassium-transporting ATPase potassium-binding subunit (574 aa).

The next 10 membrane-spanning stretches (helical) occupy residues 7–27 (IELGLFIALLAVLNIPLGTHL), 65–85 (IEYAVGLLCFNFVGILVSYLI), 136–156 (FGLAVPNFTSAATGIAAAAAL), 175–195 (LIRIHYYLLLPLSLFIAIILL), 264–284 (FVEMLSIFLIPSALTYYFGLS), 292–312 (WSIWLTMTFCFLILTLSCFIF), 390–410 (GLYGILLFVILSVFLFGLMIG), 427–447 (MAVLALMIQYVLILGLSALAL), 494–514 (LLLGVAMFLGRYFVLIPILAI), and 534–554 (GWLFIFVLGATIFLLAALNFF).

This sequence belongs to the KdpA family. In terms of assembly, the system is composed of three essential subunits: KdpA, KdpB and KdpC.

Its subcellular location is the cell inner membrane. In terms of biological role, part of the high-affinity ATP-driven potassium transport (or Kdp) system, which catalyzes the hydrolysis of ATP coupled with the electrogenic transport of potassium into the cytoplasm. This subunit binds the periplasmic potassium ions and delivers the ions to the membrane domain of KdpB through an intramembrane tunnel. The chain is Potassium-transporting ATPase potassium-binding subunit from Methylacidiphilum infernorum (isolate V4) (Methylokorus infernorum (strain V4)).